The sequence spans 152 residues: MSQLCPCGSAVEYSLCCHPYVSGEKVAPDPEHLMRSRYCAFVMQDADYLIKTWHPSCGAAALRAELIAGFAHTEWLGLTVFEHCWQDADNIGFVSFVARFTEGGKTGAIIERSRFLKENGQWYYIDGTRPQFGRNDPCPCGSGKKFKKCCGQ.

The protein belongs to the UPF0225 family.

The sequence is that of UPF0225 protein YchJ from Escherichia coli O139:H28 (strain E24377A / ETEC).